The chain runs to 89 residues: Small ribosomal subunit protein uS15 (89 aa).

Belongs to the universal ribosomal protein uS15 family. Part of the 30S ribosomal subunit. Forms a bridge to the 50S subunit in the 70S ribosome, contacting the 23S rRNA.

One of the primary rRNA binding proteins, it binds directly to 16S rRNA where it helps nucleate assembly of the platform of the 30S subunit by binding and bridging several RNA helices of the 16S rRNA. Functionally, forms an intersubunit bridge (bridge B4) with the 23S rRNA of the 50S subunit in the ribosome. In Azorhizobium caulinodans (strain ATCC 43989 / DSM 5975 / JCM 20966 / LMG 6465 / NBRC 14845 / NCIMB 13405 / ORS 571), this protein is Small ribosomal subunit protein uS15.